A 518-amino-acid polypeptide reads, in one-letter code: ORC1-type DNA replication protein 7 (518 aa).

T94–A98 contributes to the ATP binding site. Residues D165–F196 are disordered. Residues S186 to F196 show a composition bias toward low complexity. Y318 and R330 together coordinate ATP.

The protein belongs to the CDC6/cdc18 family.

Functionally, involved in regulation of DNA replication. Required to initiate DNA replication of the circular chromosome at a nearby autonomously replicating sequence (ARS) oriC1. The protein is ORC1-type DNA replication protein 7 (orc7) of Halobacterium salinarum (strain ATCC 700922 / JCM 11081 / NRC-1) (Halobacterium halobium).